A 107-amino-acid chain; its full sequence is MLENKNFKFIENEIKNNKVVLFMKGIKKSPACGFSGTVVAILNKLGVEFRDINVLFDAELREDLKKFSDWPTFPQLYINGELVGGCDIARELYQSGELEKMLKAYTR.

Residues 7–107 enclose the Glutaredoxin domain; the sequence is FKFIENEIKN…LEKMLKAYTR (101 aa). Lys24 serves as a coordination point for glutathione. Cys32 contacts [2Fe-2S] cluster. Residues Arg61, Phe73, and 86-87 each bind glutathione; that span reads CD.

It belongs to the glutaredoxin family. Monothiol subfamily.

This is Probable monothiol glutaredoxin 2 (grxC2) from Rickettsia conorii (strain ATCC VR-613 / Malish 7).